The following is a 65-amino-acid chain: Large ribosomal subunit protein uL29 (65 aa).

It belongs to the universal ribosomal protein uL29 family.

The sequence is that of Large ribosomal subunit protein uL29 from Buchnera aphidicola subsp. Cinara cedri (strain Cc).